The sequence spans 205 residues: Recombination protein RecR (205 aa).

The segment at 58 to 75 (CSECQNVTDRDSDPCVLC) adopts a C4-type zinc-finger fold. Residues 83-182 (TVICVVESPV…AVSKIARGIP (100 aa)) form the Toprim domain.

This sequence belongs to the RecR family.

In terms of biological role, may play a role in DNA repair. It seems to be involved in an RecBC-independent recombinational process of DNA repair. It may act with RecF and RecO. The polypeptide is Recombination protein RecR (Chlorobium phaeobacteroides (strain DSM 266 / SMG 266 / 2430)).